Consider the following 2076-residue polypeptide: Protein Ycf2 (2076 aa).

1458–1465 (GSIGTGRS) lines the ATP pocket.

This sequence belongs to the Ycf2 family.

It localises to the plastid. Its subcellular location is the chloroplast stroma. Probable ATPase of unknown function. Its presence in a non-photosynthetic plant (Epifagus virginiana) and experiments in tobacco indicate that it has an essential function which is probably not related to photosynthesis. This is Protein Ycf2 from Acorus calamus (Sweet flag).